Here is a 714-residue protein sequence, read N- to C-terminus: Fatty acid oxidation complex subunit alpha (714 aa).

Residues 1–190 form an enoyl-CoA hydratase region; the sequence is MEMASAFTLN…KLGLVDDVVP (190 aa). The segment at 306–714 is 3-hydroxyacyl-CoA dehydrogenase; that stretch reads APLNSVGILG…FWKTTATDLQ (409 aa).

It in the N-terminal section; belongs to the enoyl-CoA hydratase/isomerase family. In the central section; belongs to the 3-hydroxyacyl-CoA dehydrogenase family. In terms of assembly, heterotetramer of two alpha chains (FadJ) and two beta chains (FadI).

The protein localises to the cytoplasm. The catalysed reaction is a (3S)-3-hydroxyacyl-CoA = a (2E)-enoyl-CoA + H2O. It carries out the reaction a 4-saturated-(3S)-3-hydroxyacyl-CoA = a (3E)-enoyl-CoA + H2O. The enzyme catalyses a (3S)-3-hydroxyacyl-CoA + NAD(+) = a 3-oxoacyl-CoA + NADH + H(+). It catalyses the reaction (3S)-3-hydroxybutanoyl-CoA = (3R)-3-hydroxybutanoyl-CoA. Its pathway is lipid metabolism; fatty acid beta-oxidation. Catalyzes the formation of a hydroxyacyl-CoA by addition of water on enoyl-CoA. Also exhibits 3-hydroxyacyl-CoA epimerase and 3-hydroxyacyl-CoA dehydrogenase activities. The chain is Fatty acid oxidation complex subunit alpha from Escherichia coli O9:H4 (strain HS).